We begin with the raw amino-acid sequence, 86 residues long: Small ribosomal subunit protein bS16 (86 aa).

It belongs to the bacterial ribosomal protein bS16 family.

This chain is Small ribosomal subunit protein bS16, found in Borreliella afzelii (strain PKo) (Borrelia afzelii).